The following is a 232-amino-acid chain: dITP/XTP pyrophosphatase (232 aa).

Substrate is bound at residue 10 to 15; it reads TRNKGK. The active-site Proton acceptor is the aspartate 72. Position 72 (aspartate 72) interacts with Mg(2+). Residues serine 73, 153 to 156, lysine 176, and 181 to 182 contribute to the substrate site; these read FGYD and HR.

It belongs to the HAM1 NTPase family. Homodimer. Mg(2+) is required as a cofactor.

The catalysed reaction is XTP + H2O = XMP + diphosphate + H(+). It catalyses the reaction dITP + H2O = dIMP + diphosphate + H(+). It carries out the reaction ITP + H2O = IMP + diphosphate + H(+). In terms of biological role, pyrophosphatase that catalyzes the hydrolysis of nucleoside triphosphates to their monophosphate derivatives, with a high preference for the non-canonical purine nucleotides XTP (xanthosine triphosphate), dITP (deoxyinosine triphosphate) and ITP. Seems to function as a house-cleaning enzyme that removes non-canonical purine nucleotides from the nucleotide pool, thus preventing their incorporation into DNA/RNA and avoiding chromosomal lesions. The protein is dITP/XTP pyrophosphatase of Syntrophobacter fumaroxidans (strain DSM 10017 / MPOB).